The sequence spans 356 residues: Protein RecA (356 aa).

Glycine 79–threonine 86 contributes to the ATP binding site.

It belongs to the RecA family.

Its subcellular location is the cytoplasm. Its function is as follows. Can catalyze the hydrolysis of ATP in the presence of single-stranded DNA, the ATP-dependent uptake of single-stranded DNA by duplex DNA, and the ATP-dependent hybridization of homologous single-stranded DNAs. It interacts with LexA causing its activation and leading to its autocatalytic cleavage. The protein is Protein RecA of Borrelia hermsii (strain HS1 / DAH).